Here is a 656-residue protein sequence, read N- to C-terminus: DNA topoisomerase 3 (656 aa).

The Toprim domain maps to 2 to 156; the sequence is KVLCVAEKNS…QVYRAVFSHL (155 aa). One can recognise a Topo IA-type catalytic domain in the interval 172–635; that stretch reads DMKSVHAVGT…DIVEKYRKYW (464 aa). The active-site O-(5'-phospho-DNA)-tyrosine intermediate is the tyrosine 356.

It belongs to the type IA topoisomerase family. In terms of assembly, forms a complex with SGS1 and RMI1. Interacts with SGS1.

The catalysed reaction is ATP-independent breakage of single-stranded DNA, followed by passage and rejoining.. Releases the supercoiling and torsional tension of DNA introduced during the DNA replication and transcription by transiently cleaving and rejoining one strand of the DNA duplex. Introduces a single-strand break via transesterification at a target site in duplex DNA. The scissile phosphodiester is attacked by the catalytic tyrosine of the enzyme, resulting in the formation of a DNA-(5'-phosphotyrosyl)-enzyme intermediate and the expulsion of a 3'-OH DNA strand. The free DNA strand than undergoes passage around the unbroken strand thus removing DNA supercoils. Finally, in the religation step, the DNA 3'-OH attacks the covalent intermediate to expel the active-site tyrosine and restore the DNA phosphodiester backbone. Essential for proper chromosome segregation in both meiosis and mitosis. Weakly relaxes negative supercoils and displays a distinct preference for binding single-stranded DNA. The TOP3-SGS1 protein complex may function as a eukaryotic reverse gyrase introducing positive supercoils into extrachromosomal ribosomal DNA rings. The protein is DNA topoisomerase 3 (TOP3) of Saccharomyces cerevisiae (strain ATCC 204508 / S288c) (Baker's yeast).